The primary structure comprises 383 residues: Chaperone protein DnaJ (383 aa).

Residues 5–70 (DYYELLGVEK…QKRAAYDRFG (66 aa)) form the J domain. The CR-type zinc finger occupies 137–215 (GKTATVKVPS…CGGSGRTRKE (79 aa)). Zn(2+) is bound by residues C150, C153, C167, C170, C189, C192, C203, and C206. CXXCXGXG motif repeat units follow at residues 150-157 (CEDCKGTG), 167-174 (CSACHGHG), 189-196 (CPTCQGMG), and 203-210 (CRSCGGSG).

Belongs to the DnaJ family. In terms of assembly, homodimer. It depends on Zn(2+) as a cofactor.

The protein resides in the cytoplasm. Its function is as follows. Participates actively in the response to hyperosmotic and heat shock by preventing the aggregation of stress-denatured proteins and by disaggregating proteins, also in an autonomous, DnaK-independent fashion. Unfolded proteins bind initially to DnaJ; upon interaction with the DnaJ-bound protein, DnaK hydrolyzes its bound ATP, resulting in the formation of a stable complex. GrpE releases ADP from DnaK; ATP binding to DnaK triggers the release of the substrate protein, thus completing the reaction cycle. Several rounds of ATP-dependent interactions between DnaJ, DnaK and GrpE are required for fully efficient folding. Also involved, together with DnaK and GrpE, in the DNA replication of plasmids through activation of initiation proteins. This chain is Chaperone protein DnaJ, found in Paramagnetospirillum magneticum (strain ATCC 700264 / AMB-1) (Magnetospirillum magneticum).